The chain runs to 205 residues: Glycerol-3-phosphate acyltransferase (205 aa).

Residues 1 to 3 (MSA) are Periplasmic-facing. A helical transmembrane segment spans residues 4 to 24 (IAPGMILFAYLCGSISSAILV). Over 25–52 (CRIAGLPDPRESGSGNPGATNVLRIGGK) the chain is Cytoplasmic. A helical transmembrane segment spans residues 53-73 (GAAVAVLIFDILKGMLPVWGA). Topologically, residues 74-80 (YALGVTP) are periplasmic. A helical transmembrane segment spans residues 81 to 101 (FWLGLIAIAACLGHIWPVFFG). Residues 102–111 (FKGGKGVATA) are Cytoplasmic-facing. The chain crosses the membrane as a helical span at residues 112–132 (FGAIAPIGWDLTGVMAGTWLL). Over 133-137 (TVLLS) the chain is Periplasmic. Residues 138–158 (GYSSLGAIVSALIAPFYVWWF) traverse the membrane as a helical segment. Residues 159–205 (KPQFTFPVSMLSCLILLRHHDNIQRLWRRQETKIWTKLKKKRQKDSE) are Cytoplasmic-facing.

It belongs to the PlsY family. Probably interacts with PlsX.

The protein resides in the cell inner membrane. The catalysed reaction is sn-glycerol 3-phosphate + an acyl-CoA = a 1-acyl-sn-glycero-3-phosphate + CoA. It carries out the reaction a fatty acyl-[ACP] + sn-glycerol 3-phosphate = a 1-acyl-sn-glycero-3-phosphate + holo-[ACP]. It functions in the pathway lipid metabolism; phospholipid metabolism. Functionally, catalyzes the transfer of an acyl group from acyl-ACP to glycerol-3-phosphate (G3P) to form lysophosphatidic acid (LPA). This enzyme can also utilize acyl-CoA as fatty acyl donor, but not acyl-PO(4). The sequence is that of Glycerol-3-phosphate acyltransferase from Salmonella schwarzengrund (strain CVM19633).